The primary structure comprises 230 residues: Somatolactin (230 aa).

Positions 1 to 23 (MKKTTVLQVCMVFVVCSLQAVIG) are cleaved as a signal peptide. 3 cysteine pairs are disulfide-bonded: Cys-28/Cys-38, Cys-87/Cys-202, and Cys-219/Cys-227. Asn-226 carries N-linked (GlcNAc...) asparagine glycosylation.

The protein belongs to the somatotropin/prolactin family.

The protein resides in the secreted. The chain is Somatolactin from Carassius auratus (Goldfish).